Reading from the N-terminus, the 333-residue chain is Ornithine carbamoyltransferase (333 aa).

Carbamoyl phosphate contacts are provided by residues 57-60 (STRT), Arg-108, and 135-138 (HPTQ). Residues Asn-168, Asp-232, and 236 to 237 (SM) contribute to the L-ornithine site. Carbamoyl phosphate-binding positions include 274–275 (CL) and Arg-319.

It belongs to the aspartate/ornithine carbamoyltransferase superfamily. OTCase family.

It is found in the cytoplasm. It carries out the reaction carbamoyl phosphate + L-ornithine = L-citrulline + phosphate + H(+). It functions in the pathway amino-acid degradation; L-arginine degradation via ADI pathway; carbamoyl phosphate from L-arginine: step 2/2. In terms of biological role, reversibly catalyzes the transfer of the carbamoyl group from carbamoyl phosphate (CP) to the N(epsilon) atom of ornithine (ORN) to produce L-citrulline. The polypeptide is Ornithine carbamoyltransferase (Pediococcus pentosaceus (strain ATCC 25745 / CCUG 21536 / LMG 10740 / 183-1w)).